A 600-amino-acid chain; its full sequence is MNKLKVTLLASSVVLAATLLSACGSNQSSSTSTKKLKAGNFDVAYQNPDKAIKGGNLKVAYQSDSPMKAQWLSGLSNDATFATMSGPGGGQDGLFFTDSGFKFIKGGAADVALDKESKTATITLRKDLKWSDGSEVTAKDYEFTYETIANPAYGSDRWTDSLANIVGLSDYHAGKAKTISGITFPDGENGKVIKVQFKEMKPGMTQSGNGYFLETVAPYQYLKDVAPKDLASSPKTTTKPLVTGPFKPENVVAGESIKYVPNPYYWGKKPKLNSITYEVVSTAKSVAALSSSKYDFINGMVSSQYKQVKNLKGYKVLGQQAMAISLMYYNLGHYDAKNSINVQDRKTPLQDQNVRQAIGYARNVAEVANKFSNGLSTPANSLIPPIFKQFTSSSVKGYEKQDLDKANKLLDEDGWKLNKSTGYREKDGKELSLVYAAHVGDANAETIAQNYIQQWKKIGVKVSLYNGKLMEFNSWVDHMTTPPGANDWDITDGSWSLASEPSQQDLFSASAPYNFGHFNDSEITKDLNDIDSAKSENPTYRKAAFVKYQEDMNKKAYVVPTNFSLSYTPVNKRVVGMTLDYGAMDTWSEIGVSSAKLATK.

The first 22 residues, 1–22 (MNKLKVTLLASSVVLAATLLSA), serve as a signal peptide directing secretion. A lipid anchor (N-palmitoyl cysteine) is attached at Cys-23. Residue Cys-23 is the site of S-diacylglycerol cysteine attachment.

It belongs to the bacterial solute-binding protein 5 family. The complex is composed of two ATP-binding proteins (OppD and OppF), two transmembrane proteins (OppB and OppC) and a solute-binding protein (OppA).

It localises to the cell membrane. In terms of biological role, part of the ABC transporter complex OppABCDF involved in the uptake of oligopeptides. The protein is Oligopeptide-binding protein OppA of Lactococcus lactis subsp. cremoris (strain SK11).